A 209-amino-acid chain; its full sequence is FMN-dependent NADH:quinone oxidoreductase (209 aa).

FMN is bound by residues Ser18, 102–105 (MYNF), and 146–149 (SRGG).

This sequence belongs to the azoreductase type 1 family. Homodimer. It depends on FMN as a cofactor.

The enzyme catalyses 2 a quinone + NADH + H(+) = 2 a 1,4-benzosemiquinone + NAD(+). The catalysed reaction is N,N-dimethyl-1,4-phenylenediamine + anthranilate + 2 NAD(+) = 2-(4-dimethylaminophenyl)diazenylbenzoate + 2 NADH + 2 H(+). Functionally, quinone reductase that provides resistance to thiol-specific stress caused by electrophilic quinones. Its function is as follows. Also exhibits azoreductase activity. Catalyzes the reductive cleavage of the azo bond in aromatic azo compounds to the corresponding amines. The sequence is that of FMN-dependent NADH:quinone oxidoreductase from Saccharophagus degradans (strain 2-40 / ATCC 43961 / DSM 17024).